Consider the following 429-residue polypeptide: Adenosylmethionine-8-amino-7-oxononanoate aminotransferase (429 aa).

Position 52 (Trp-52) interacts with substrate. A pyridoxal 5'-phosphate-binding site is contributed by 112 to 113; it reads GS. Tyr-144 lines the substrate pocket. Asp-245 is a binding site for pyridoxal 5'-phosphate. Substrate contacts are provided by Lys-274 and Gly-307. N6-(pyridoxal phosphate)lysine is present on Lys-274. Position 308–309 (308–309) interacts with pyridoxal 5'-phosphate; that stretch reads PT. Arg-391 lines the substrate pocket.

Belongs to the class-III pyridoxal-phosphate-dependent aminotransferase family. BioA subfamily. In terms of assembly, homodimer. Requires pyridoxal 5'-phosphate as cofactor.

It is found in the cytoplasm. It carries out the reaction (8S)-8-amino-7-oxononanoate + S-adenosyl-L-methionine = S-adenosyl-4-methylsulfanyl-2-oxobutanoate + (7R,8S)-7,8-diammoniononanoate. Its pathway is cofactor biosynthesis; biotin biosynthesis; 7,8-diaminononanoate from 8-amino-7-oxononanoate (SAM route): step 1/1. In terms of biological role, catalyzes the transfer of the alpha-amino group from S-adenosyl-L-methionine (SAM) to 7-keto-8-aminopelargonic acid (KAPA) to form 7,8-diaminopelargonic acid (DAPA). It is the only aminotransferase known to utilize SAM as an amino donor. The chain is Adenosylmethionine-8-amino-7-oxononanoate aminotransferase from Buchnera aphidicola subsp. Baizongia pistaciae (strain Bp).